We begin with the raw amino-acid sequence, 326 residues long: Protein TMED8 (326 aa).

The interval 1–80 is disordered; the sequence is MSDLQAAEGP…VSPGSKDATE (80 aa). The region spanning 160 to 324 is the GOLD domain; sequence PPCIWTFAKV…NKTLYFHIYY (165 aa). An N6-acetyllysine modification is found at K170. The tract at residues 238–268 is disordered; the sequence is DSCDDEDEEEEEEEEIEEPVPAGDVERGSRS. Residues 239-255 are compositionally biased toward acidic residues; the sequence is SCDDEDEEEEEEEEIEE.

This chain is Protein TMED8 (TMED8), found in Pongo abelii (Sumatran orangutan).